Reading from the N-terminus, the 301-residue chain is Sulfate adenylyltransferase subunit 2 (301 aa).

The protein belongs to the PAPS reductase family. CysD subfamily. As to quaternary structure, heterodimer composed of CysD, the smaller subunit, and CysN.

It carries out the reaction sulfate + ATP + H(+) = adenosine 5'-phosphosulfate + diphosphate. Its pathway is sulfur metabolism; hydrogen sulfide biosynthesis; sulfite from sulfate: step 1/3. With CysN forms the ATP sulfurylase (ATPS) that catalyzes the adenylation of sulfate producing adenosine 5'-phosphosulfate (APS) and diphosphate, the first enzymatic step in sulfur assimilation pathway. APS synthesis involves the formation of a high-energy phosphoric-sulfuric acid anhydride bond driven by GTP hydrolysis by CysN coupled to ATP hydrolysis by CysD. The polypeptide is Sulfate adenylyltransferase subunit 2 (Trichlorobacter lovleyi (strain ATCC BAA-1151 / DSM 17278 / SZ) (Geobacter lovleyi)).